A 1188-amino-acid polypeptide reads, in one-letter code: DNA-directed RNA polymerase subunit beta (1188 aa).

The segment at 1149 to 1188 (ELRDLDEGEDDDVMHVDDLEKAREKQAQETPEVSENSEEK) is disordered. Basic and acidic residues predominate over residues 1161-1175 (VMHVDDLEKAREKQA).

The protein belongs to the RNA polymerase beta chain family. As to quaternary structure, the RNAP catalytic core consists of 2 alpha, 1 beta, 1 beta' and 1 omega subunit. When a sigma factor is associated with the core the holoenzyme is formed, which can initiate transcription.

The catalysed reaction is RNA(n) + a ribonucleoside 5'-triphosphate = RNA(n+1) + diphosphate. Its function is as follows. DNA-dependent RNA polymerase catalyzes the transcription of DNA into RNA using the four ribonucleoside triphosphates as substrates. This chain is DNA-directed RNA polymerase subunit beta, found in Streptococcus uberis (strain ATCC BAA-854 / 0140J).